The following is a 361-amino-acid chain: Hsc70-interacting protein (361 aa).

Positions 39 to 98 (GGTIPPAPASTSTDETSKGKAEEQPEEPVKSPEPESEESDLEIDNEGVIEPDNDDPQEMG) are disordered. The span at 53 to 71 (ETSKGKAEEQPEEPVKSPE) shows a compositional bias: basic and acidic residues. The span at 72-98 (PESEESDLEIDNEGVIEPDNDDPQEMG) shows a compositional bias: acidic residues. TPR repeat units follow at residues 112–145 (ANEKKMEAINALSEGDLQKAVNLFTDAIKLNPCL), 147–179 (ILYAKRASVFVKLQKPNAAIRDCDRAIKINPDS), and 181–213 (QTYKWRGKAHRLLGHWEEAAHDLALACKLDYDE). The span at 254-270 (KAREEHERAQREEEARR) shows a compositional bias: basic and acidic residues. The segment at 254-292 (KAREEHERAQREEEARRQAGGAQFGGFPGGFPGGFPGAM) is disordered. Residues 275-292 (AQFGGFPGGFPGGFPGAM) show a composition bias toward gly residues. An STI1 domain is found at 311 to 350 (DPEVLAAMQDPEVMAAFQDVAQNPANMSKYQNNPKVMSLI).

Belongs to the FAM10 family. In terms of assembly, homotetramer. Interacts with HSC70 as well as DNAJ homologs and HSP90.

It is found in the cytoplasm. Functionally, one HIP oligomer binds the ATPase domains of at least two HSC70 molecules dependent on activation of the HSC70 ATPase by HSP40. Stabilizes the ADP state of HSC70 that has a high affinity for substrate protein. Through its own chaperone activity, it may contribute to the interaction of HSC70 with various target proteins. The chain is Hsc70-interacting protein (ST13) from Gallus gallus (Chicken).